Reading from the N-terminus, the 443-residue chain is Thymidine phosphorylase (443 aa).

It belongs to the thymidine/pyrimidine-nucleoside phosphorylase family. As to quaternary structure, homodimer.

The catalysed reaction is thymidine + phosphate = 2-deoxy-alpha-D-ribose 1-phosphate + thymine. The protein operates within pyrimidine metabolism; dTMP biosynthesis via salvage pathway; dTMP from thymine: step 1/2. Functionally, the enzymes which catalyze the reversible phosphorolysis of pyrimidine nucleosides are involved in the degradation of these compounds and in their utilization as carbon and energy sources, or in the rescue of pyrimidine bases for nucleotide synthesis. This is Thymidine phosphorylase from Shewanella halifaxensis (strain HAW-EB4).